Reading from the N-terminus, the 186-residue chain is Peptidyl-tRNA hydrolase (186 aa).

Y14 serves as a coordination point for tRNA. The active-site Proton acceptor is the H19. Y64, N66, and N112 together coordinate tRNA.

Belongs to the PTH family. Monomer.

The protein resides in the cytoplasm. The catalysed reaction is an N-acyl-L-alpha-aminoacyl-tRNA + H2O = an N-acyl-L-amino acid + a tRNA + H(+). In terms of biological role, hydrolyzes ribosome-free peptidyl-tRNAs (with 1 or more amino acids incorporated), which drop off the ribosome during protein synthesis, or as a result of ribosome stalling. Its function is as follows. Catalyzes the release of premature peptidyl moieties from peptidyl-tRNA molecules trapped in stalled 50S ribosomal subunits, and thus maintains levels of free tRNAs and 50S ribosomes. The protein is Peptidyl-tRNA hydrolase of Bacillus cytotoxicus (strain DSM 22905 / CIP 110041 / 391-98 / NVH 391-98).